We begin with the raw amino-acid sequence, 354 residues long: Photosystem II protein D1 (354 aa).

Thr-2 carries the N-acetylthreonine modification. A Phosphothreonine modification is found at Thr-2. 3 helical membrane passes run 29-46 (YIGW…TATS), 118-133 (HFLL…EWEL), and 142-156 (WIAV…AATA). His-118 serves as a coordination point for chlorophyll a. Tyr-126 serves as a coordination point for pheophytin a. Positions 170 and 189 each coordinate [CaMn4O5] cluster. The chain crosses the membrane as a helical span at residues 197–218 (FHMLGVAGVFGGSLFSAMHGSL). Residue His-198 participates in chlorophyll a binding. Residues His-215 and 264–265 (SF) each bind a quinone. His-215 serves as a coordination point for Fe cation. Fe cation is bound at residue His-272. Residues 274–288 (FLAAWPVVGIWFTAL) form a helical membrane-spanning segment. Residues His-332, Glu-333, Asp-342, and Ala-344 each coordinate [CaMn4O5] cluster. Positions 345 to 354 (ASIEAPSLNG) are excised as a propeptide.

It belongs to the reaction center PufL/M/PsbA/D family. In terms of assembly, PSII is composed of 1 copy each of membrane proteins PsbA, PsbB, PsbC, PsbD, PsbE, PsbF, PsbH, PsbI, PsbJ, PsbK, PsbL, PsbM, PsbT, PsbX, PsbY, PsbZ, Psb30/Ycf12, at least 3 peripheral proteins of the oxygen-evolving complex and a large number of cofactors. It forms dimeric complexes. It depends on The D1/D2 heterodimer binds P680, chlorophylls that are the primary electron donor of PSII, and subsequent electron acceptors. It shares a non-heme iron and each subunit binds pheophytin, quinone, additional chlorophylls, carotenoids and lipids. D1 provides most of the ligands for the Mn4-Ca-O5 cluster of the oxygen-evolving complex (OEC). There is also a Cl(-1) ion associated with D1 and D2, which is required for oxygen evolution. The PSII complex binds additional chlorophylls, carotenoids and specific lipids. as a cofactor. Tyr-161 forms a radical intermediate that is referred to as redox-active TyrZ, YZ or Y-Z. In terms of processing, C-terminally processed by CTPA; processing is essential to allow assembly of the oxygen-evolving complex and thus photosynthetic growth.

It is found in the plastid. The protein resides in the chloroplast thylakoid membrane. It catalyses the reaction 2 a plastoquinone + 4 hnu + 2 H2O = 2 a plastoquinol + O2. In terms of biological role, photosystem II (PSII) is a light-driven water:plastoquinone oxidoreductase that uses light energy to abstract electrons from H(2)O, generating O(2) and a proton gradient subsequently used for ATP formation. It consists of a core antenna complex that captures photons, and an electron transfer chain that converts photonic excitation into a charge separation. The D1/D2 (PsbA/PsbD) reaction center heterodimer binds P680, the primary electron donor of PSII as well as several subsequent electron acceptors. The chain is Photosystem II protein D1 from Selaginella uncinata (Blue spike-moss).